The sequence spans 396 residues: Subtelomeric hrmA-associated cluster protein AFUB_079040 (396 aa).

Disordered stretches follow at residues 1-32 (MANK…QQSL) and 347-396 (YPEN…ECGR). Positions 23–32 (SHASGSQQSL) are enriched in polar residues. Residues 367–380 (SKKKKDKKKKKSNK) are compositionally biased toward basic residues.

Part of the subtelomeric hrmA-associated cluster (HAC) containing genes that alter the hyphal surface (such as reduced total chitin or increased beta-glucan exposure) and perturb inter-hyphal interactions within the developing biofilms, resulting in a loss of vertically aligned polarized growing filaments. Consequently, this hypoxia-typic morphotype (called H-MORPH) with altered biofilm architecture leads to increased hypoxia fitness, increased host inflammation, rapid disease progression, and mortality in a murine model of invasive aspergillosis. In Aspergillus fumigatus (strain CBS 144.89 / FGSC A1163 / CEA10) (Neosartorya fumigata), this protein is Subtelomeric hrmA-associated cluster protein AFUB_079040.